We begin with the raw amino-acid sequence, 710 residues long: Elongation factor G (710 aa).

A tr-type G domain is found at 8–297 (ERVRNIGIAA…AVVDYLPSPI (290 aa)). Residues 17–24 (AHIDAGKT), 96–100 (DTPGH), and 150–153 (NKMD) contribute to the GTP site.

Belongs to the TRAFAC class translation factor GTPase superfamily. Classic translation factor GTPase family. EF-G/EF-2 subfamily.

It localises to the cytoplasm. Its function is as follows. Catalyzes the GTP-dependent ribosomal translocation step during translation elongation. During this step, the ribosome changes from the pre-translocational (PRE) to the post-translocational (POST) state as the newly formed A-site-bound peptidyl-tRNA and P-site-bound deacylated tRNA move to the P and E sites, respectively. Catalyzes the coordinated movement of the two tRNA molecules, the mRNA and conformational changes in the ribosome. In Synechococcus sp. (strain JA-3-3Ab) (Cyanobacteria bacterium Yellowstone A-Prime), this protein is Elongation factor G.